Here is a 474-residue protein sequence, read N- to C-terminus: tRNA-2-methylthio-N(6)-dimethylallyladenosine synthase (474 aa).

The 118-residue stretch at 3 to 120 (KKLHIKTWGC…LPEMINHVQG (118 aa)) folds into the MTTase N-terminal domain. Residues Cys-12, Cys-49, Cys-83, Cys-157, Cys-161, and Cys-164 each coordinate [4Fe-4S] cluster. The Radical SAM core domain maps to 143–375 (RAEGPTAFVS…QQRISQQAME (233 aa)). The 64-residue stretch at 378–441 (RKMVGTVQRV…ASSLRGILLR (64 aa)) folds into the TRAM domain.

The protein belongs to the methylthiotransferase family. MiaB subfamily. In terms of assembly, monomer. Requires [4Fe-4S] cluster as cofactor.

The protein resides in the cytoplasm. It carries out the reaction N(6)-dimethylallyladenosine(37) in tRNA + (sulfur carrier)-SH + AH2 + 2 S-adenosyl-L-methionine = 2-methylsulfanyl-N(6)-dimethylallyladenosine(37) in tRNA + (sulfur carrier)-H + 5'-deoxyadenosine + L-methionine + A + S-adenosyl-L-homocysteine + 2 H(+). Its function is as follows. Catalyzes the methylthiolation of N6-(dimethylallyl)adenosine (i(6)A), leading to the formation of 2-methylthio-N6-(dimethylallyl)adenosine (ms(2)i(6)A) at position 37 in tRNAs that read codons beginning with uridine. The chain is tRNA-2-methylthio-N(6)-dimethylallyladenosine synthase from Yersinia pestis bv. Antiqua (strain Antiqua).